The sequence spans 300 residues: Ribosomal protein L11 methyltransferase (300 aa).

Positions 152, 173, 195, and 234 each coordinate S-adenosyl-L-methionine.

Belongs to the methyltransferase superfamily. PrmA family.

It is found in the cytoplasm. The catalysed reaction is L-lysyl-[protein] + 3 S-adenosyl-L-methionine = N(6),N(6),N(6)-trimethyl-L-lysyl-[protein] + 3 S-adenosyl-L-homocysteine + 3 H(+). Functionally, methylates ribosomal protein L11. In Burkholderia thailandensis (strain ATCC 700388 / DSM 13276 / CCUG 48851 / CIP 106301 / E264), this protein is Ribosomal protein L11 methyltransferase.